The primary structure comprises 417 residues: Protein FAM181B (417 aa).

Residues 104 to 147 are disordered; the sequence is CSGLMGTAPPRPASPSAADAPAKRPPGAPTVATPAHCKAAPRRE.

It belongs to the FAM181 family.

The sequence is that of Protein FAM181B (Fam181b) from Mus musculus (Mouse).